The following is a 247-amino-acid chain: LOB domain-containing protein 38 (247 aa).

One can recognise an LOB domain in the interval 1–107 (MSCNGCRVLR…VETVLRGGSL (107 aa)). Residues 157–170 (FSSSRSRSRSTASP) are compositionally biased toward low complexity. The tract at residues 157-184 (FSSSRSRSRSTASPPKRKRLSSEQQPSS) is disordered.

This sequence belongs to the LOB domain-containing protein family. In terms of tissue distribution, expressed in young shoots, roots, stems, leaves and flowers.

This chain is LOB domain-containing protein 38 (LBD38), found in Arabidopsis thaliana (Mouse-ear cress).